Here is a 229-residue protein sequence, read N- to C-terminus: MNQWEELQESVGFDFKDVELLKQAFTHSSYVNEHRRENVKDNERLEFLGDAVLELTVSNYLFNKYPDMAEGHMTKMRAAIVCEPSLVEFAEAVHFSKYVRLGKGEEKAGGRTRPALLADVFESFIGALYLDNGIDKVVTFLERVIFPKIDAGAYLQTVDYKTQLQEIVQRDRDVLIEYDILGETGPAHNKAFDAQVIVNGQVLGKGSGRTKKQAEQSAAQFAINQLTHR.

The RNase III domain occupies 4-133 (WEELQESVGF…FIGALYLDNG (130 aa)). Glutamate 46 lines the Mg(2+) pocket. Aspartate 50 is an active-site residue. Positions 119 and 122 each coordinate Mg(2+). Glutamate 122 is an active-site residue. One can recognise a DRBM domain in the interval 159 to 228 (DYKTQLQEIV…AQFAINQLTH (70 aa)).

Belongs to the ribonuclease III family. As to quaternary structure, homodimer. Requires Mg(2+) as cofactor.

It localises to the cytoplasm. The catalysed reaction is Endonucleolytic cleavage to 5'-phosphomonoester.. In terms of biological role, digests double-stranded RNA. Involved in the processing of primary rRNA transcript to yield the immediate precursors to the large and small rRNAs (23S and 16S). Processes some mRNAs, and tRNAs when they are encoded in the rRNA operon. Processes pre-crRNA and tracrRNA of type II CRISPR loci if present in the organism. The polypeptide is Ribonuclease 3 (Listeria monocytogenes serotype 4b (strain CLIP80459)).